We begin with the raw amino-acid sequence, 119 residues long: Autophagy-related protein 8A (119 aa).

Residue G117 is the site of Phosphatidylethanolamine amidated glycine attachment. A propeptide spans 118-119 (removed in mature form); that stretch reads SA.

Belongs to the ATG8 family. Interacts with ATG4. In terms of processing, the C-terminal 2 residues are removed by ATG4 to expose Gly-117 at the C-terminus. The C-terminal Gly is then amidated with phosphatidylethanolamine by an activating system similar to that for ubiquitin. Constitutively expressed.

It localises to the cytoplasmic vesicle. The protein localises to the autophagosome membrane. Its subcellular location is the vacuole membrane. It is found in the cytoplasm. The protein resides in the cytoskeleton. In terms of biological role, ubiquitin-like modifier involved in cytoplasm to vacuole transport (Cvt) vesicles and autophagosomes formation. May mediate the delivery of the vesicles and autophagosomes to the vacuole via the microtubule cytoskeleton. Ubiquitin-like modifier involved in autophagosomes formation. May mediate the delivery of the autophagosomes to the vacuole via the microtubule cytoskeleton. This chain is Autophagy-related protein 8A (ATG8A), found in Oryza sativa subsp. indica (Rice).